The chain runs to 303 residues: MPTPDAVCILTPTYNEAETIADVISDYRDEGFANVLVIDGGSTDGTRELAEDAGAHVVVQSGSGKGQAVREAVEDHIQAPYVLMLDGDGTYEATDATKMLDPLTEGYDHVIGDRFADMRPGAMTRLNRVGNRIINRAFAFIHGQDFRDILSGYRAFTRESFLDMTLTSDGFGIETEMAVECAKRGIKTTVVPTTYYPRPDGSDTNLDPIRDGGIIFLELYRRAKTNNPLFYFGSVGFASTATGLGLALYVAYEWVVRSISHEVIAVVSMAGILFGVQLLMFGVLSDLILSLHREQMKRIEELE.

Transmembrane regions (helical) follow at residues 230 to 250 and 263 to 283; these read FYFG…ALYV and VIAV…MFGV.

It belongs to the glycosyltransferase 2 family.

The protein localises to the cell membrane. It functions in the pathway cell surface structure biogenesis; S-layer biogenesis. Its function is as follows. Involved in the assembly of a N-linked pentasaccharide that decorates the S-layer glycoprotein and flagellins. Adds the first hexose subunit of the pentasaccharide to the dolichol phosphate carrier. This Haloferax volcanii (strain ATCC 29605 / DSM 3757 / JCM 8879 / NBRC 14742 / NCIMB 2012 / VKM B-1768 / DS2) (Halobacterium volcanii) protein is Glycosyltransferase AglJ (aglJ).